Here is a 430-residue protein sequence, read N- to C-terminus: Serine--tRNA ligase (430 aa).

237 to 239 (TAE) serves as a coordination point for L-serine. 268-270 (RSE) lines the ATP pocket. Residue Glu-291 participates in L-serine binding. An ATP-binding site is contributed by 355–358 (EISS). Ser-391 provides a ligand contact to L-serine.

It belongs to the class-II aminoacyl-tRNA synthetase family. Type-1 seryl-tRNA synthetase subfamily. As to quaternary structure, homodimer. The tRNA molecule binds across the dimer.

The protein localises to the cytoplasm. It carries out the reaction tRNA(Ser) + L-serine + ATP = L-seryl-tRNA(Ser) + AMP + diphosphate + H(+). The enzyme catalyses tRNA(Sec) + L-serine + ATP = L-seryl-tRNA(Sec) + AMP + diphosphate + H(+). Its pathway is aminoacyl-tRNA biosynthesis; selenocysteinyl-tRNA(Sec) biosynthesis; L-seryl-tRNA(Sec) from L-serine and tRNA(Sec): step 1/1. Catalyzes the attachment of serine to tRNA(Ser). Is also able to aminoacylate tRNA(Sec) with serine, to form the misacylated tRNA L-seryl-tRNA(Sec), which will be further converted into selenocysteinyl-tRNA(Sec). This is Serine--tRNA ligase from Escherichia fergusonii (strain ATCC 35469 / DSM 13698 / CCUG 18766 / IAM 14443 / JCM 21226 / LMG 7866 / NBRC 102419 / NCTC 12128 / CDC 0568-73).